Reading from the N-terminus, the 287-residue chain is Cyclopropane mycolic acid synthase 1 (287 aa).

Residues 33 to 34 (YS), 68 to 76 (LLDVGCGWG), 94 to 99 (TLSKNQ), and 123 to 124 (WE) each bind S-adenosyl-L-methionine. Cys-269 is an active-site residue.

This sequence belongs to the CFA/CMAS family. As to quaternary structure, homodimer.

The protein localises to the cytoplasm. It carries out the reaction a 1-acyl-2-(9Z)-enoyl-sn-glycero-3-phospholipid + S-adenosyl-L-methionine = a 1-acyl-2-(9-cyclopronane)-acyl-sn-glycero-3-phospholipid + S-adenosyl-L-homocysteine + H(+). It functions in the pathway lipid metabolism; mycolic acid biosynthesis. Catalyzes the conversion of a double bond to a cyclopropane ring at the distal position of an alpha mycolic acid via the transfer of a methylene group from S-adenosyl-L-methionine. Cyclopropanated mycolic acids are key factors participating in cell envelope permeability, host immunomodulation and persistence. The polypeptide is Cyclopropane mycolic acid synthase 1 (cmaA1) (Mycobacterium tuberculosis (strain ATCC 25177 / H37Ra)).